A 162-amino-acid chain; its full sequence is NADH-quinone oxidoreductase subunit I 2 (162 aa).

4Fe-4S ferredoxin-type domains are found at residues 53–83 and 93–122; these read LRRY…IDSE and TRYD…ETRI. [4Fe-4S] cluster contacts are provided by Cys-63, Cys-66, Cys-69, Cys-73, Cys-102, Cys-105, Cys-108, and Cys-112.

This sequence belongs to the complex I 23 kDa subunit family. As to quaternary structure, NDH-1 is composed of 14 different subunits. Subunits NuoA, H, J, K, L, M, N constitute the membrane sector of the complex. [4Fe-4S] cluster serves as cofactor.

It localises to the cell inner membrane. It carries out the reaction a quinone + NADH + 5 H(+)(in) = a quinol + NAD(+) + 4 H(+)(out). In terms of biological role, NDH-1 shuttles electrons from NADH, via FMN and iron-sulfur (Fe-S) centers, to quinones in the respiratory chain. The immediate electron acceptor for the enzyme in this species is believed to be ubiquinone. Couples the redox reaction to proton translocation (for every two electrons transferred, four hydrogen ions are translocated across the cytoplasmic membrane), and thus conserves the redox energy in a proton gradient. The protein is NADH-quinone oxidoreductase subunit I 2 of Nitrosococcus oceani (strain ATCC 19707 / BCRC 17464 / JCM 30415 / NCIMB 11848 / C-107).